The following is a 404-amino-acid chain: Zinc finger CCCH domain-containing protein 15 homolog (404 aa).

Pro residues predominate over residues 1-10 (MPPKKAPPGP). The segment at 1-71 (MPPKKAPPGP…KRKEEKEKKL (71 aa)) is disordered. A compositionally biased stretch (basic and acidic residues) spans 12–28 (KKTEQKKKEKVIEDKTF). The span at 38–50 (QQKFIQQVQKQVQ) shows a compositional bias: low complexity. Basic and acidic residues predominate over residues 56 to 71 (PRQDGDKRKEEKEKKL). 2 consecutive C3H1-type zinc fingers follow at residues 94–121 (DPKS…HDLS) and 165–202 (PTTD…HALP). The residue at position 218 (T218) is a Phosphothreonine. Residue S221 is modified to Phosphoserine. A coiled-coil region spans residues 246 to 270 (LAWKKRKIAEKKAKLAAEEERKKSD). 2 stretches are compositionally biased toward low complexity: residues 352–361 (EAAKTAAAED) and 369–380 (PSSSAPANDAAP). A disordered region spans residues 352–380 (EAAKTAAAEDAAADEDGPSSSAPANDAAP).

The protein belongs to the ZC3H15/TMA46 family.

This is Zinc finger CCCH domain-containing protein 15 homolog from Drosophila melanogaster (Fruit fly).